Reading from the N-terminus, the 343-residue chain is Glucokinase (343 aa).

21–26 (ADVGGT) contributes to the ATP binding site.

The protein belongs to the bacterial glucokinase family.

It is found in the cytoplasm. It carries out the reaction D-glucose + ATP = D-glucose 6-phosphate + ADP + H(+). This is Glucokinase from Cupriavidus pinatubonensis (strain JMP 134 / LMG 1197) (Cupriavidus necator (strain JMP 134)).